Consider the following 334-residue polypeptide: Succinate receptor 1 (334 aa).

The Extracellular portion of the chain corresponds to 5–31; that stretch reads MAWNATCKNWLAAEAALEKYYLSIFYG. N8 carries an N-linked (GlcNAc...) asparagine glycan. A helical transmembrane segment spans residues 32 to 52; it reads IEFVVGVLGNTIVVYGYIFSL. The Cytoplasmic portion of the chain corresponds to 53 to 59; it reads KNWNSSN. A helical membrane pass occupies residues 60–80; the sequence is IYLFNLSVSDLAFLCTLPMLI. Over 81-103 the chain is Extracellular; sequence RSYANGNWIYGDVLCISNRYVLH. A disulfide bridge connects residues C95 and C172. A helical transmembrane segment spans residues 104-124; the sequence is ANLYTSILFLTFISIDRYLII. The Cytoplasmic portion of the chain corresponds to 125 to 137; it reads KYPFREHLLQKKE. The helical transmembrane segment at 138 to 158 threads the bilayer; it reads FAILISLAIWVLVTLELLPIL. The Extracellular segment spans residues 159–185; it reads PLINPVITDNGTTCNDFASSGDPNYNL. The N-linked (GlcNAc...) asparagine glycan is linked to N168. A helical transmembrane segment spans residues 186 to 206; the sequence is IYSMCLTLLGFLIPLFVMCFF. Over 207–230 the chain is Cytoplasmic; sequence YYKIALFLKQRNRQVATALPLEKP. Residues 231–251 form a helical membrane-spanning segment; the sequence is LNLVIMAVVIFSVLFTPYHVM. At 252–281 the chain is on the extracellular side; that stretch reads RNVRIASRLGSWKQYQCTQVVINSFYIVTR. The chain crosses the membrane as a helical span at residues 282 to 302; the sequence is PLAFLNSVINPVFYFLLGDHF. Residues 303-334 lie on the Cytoplasmic side of the membrane; it reads RDMLMNQLRHNFKSLTSFSRWAHELLLSFREK.

Belongs to the G-protein coupled receptor 1 family. As to expression, expressed specifically in kidney. Highly expressed in immature dendritic cells, expression rapidly downregulates after maturation. Also expressed in macrophages.

The protein resides in the cell membrane. Its function is as follows. G protein-coupled receptor for succinate able to mediate signaling through Gq/GNAQ or Gi/GNAI second messengers depending on the cell type and the processes regulated. Succinate-SUCNR1 signaling serves as a link between metabolic stress, inflammation and energy homeostasis. In macrophages, plays a range of immune-regulatory roles. During inflammation, succinate-SUCNR1 signaling may act as an anti-inflammatory mediator or boost inflammation depending on the inflammatory status of cells. Hyperpolarizes M2 macrophages versus M1 phenotype through Gq signaling by regulating the transcription of genes involved in immune function. In activated M1 macrophages, plays a pro-inflammatory role in response to LPS. Expressed in dendritic cells, where it is involved in the sensing of immunological danger and enhances immunity. Mediates succinate triggered intracelleular calcium mobilization, induces migratory responses and acts in synergy with Toll-like receptor ligands for the production of proinflammatory cytokines as well as an enhancement of antigen-specific activation of helper T cells. In the small intestine, mediates the activation of tuft cells by dietary succinate and triggers type 2 immunity. In adipocytes, plays an important role in the control of energy metabolism. In response to succinate, controls leptin expression in an AMPK-JNK-CEBPA-dependent as well as circadian clock-regulated manner. In muscle tissue, is expressed in non-muscle cells and coordinates muscle remodeling in response to the succinate produced during exercise training in a paracrine manner. In retina, acts as a mediator of vessel growth during retinal development. In response to succinate, regulates the production of angiogenic factors, including VEGF, by retinal ganglion neurons. The chain is Succinate receptor 1 from Homo sapiens (Human).